The chain runs to 292 residues: Ventral anterior homeobox 2 (292 aa).

Over residues 1 to 36 the composition is skewed to basic and acidic residues; it reads MGDGGAERDRGPKRREEPGGRSGRHGEHRGAEDLRA. The segment at 1-74 is disordered; it reads MGDGGAERDR…DGQQALGETD (74 aa). The homeobox DNA-binding region spans 102-161; sequence PKRTRTSFTAEQLYRLEMEFQRCQYVVGRERTELARQLNLSETQVKVWFQNRRTKQKKDQ. The interval 207–242 is disordered; the sequence is LPGLPASHRGTSLVDPRNSSPRLNPMPSASASSPLP.

It belongs to the EMX homeobox family. In terms of tissue distribution, expressed in the developing and mature retina.

The protein localises to the nucleus. Functionally, transcription factor that may function in dorsoventral specification of the forebrain. Regulates the expression of Wnt signaling antagonists including the expression of a truncated TCF7L2 isoform that cannot bind CTNNB1 and acts therefore as a potent dominant-negative Wnt antagonist. Plays a crucial role in eye development and, in particular, in the specification of the ventral optic vesicle. May be a regulator of axial polarization in the retina. This chain is Ventral anterior homeobox 2 (Vax2), found in Mus musculus (Mouse).